We begin with the raw amino-acid sequence, 264 residues long: S-adenosylmethionine decarboxylase proenzyme (264 aa).

Ser-112 functions as the Schiff-base intermediate with substrate; via pyruvic acid in the catalytic mechanism. Residue Ser-112 is modified to Pyruvic acid (Ser); by autocatalysis. The active-site Proton acceptor; for processing activity is His-117. The active-site Proton donor; for catalytic activity is Cys-140.

This sequence belongs to the prokaryotic AdoMetDC family. Type 2 subfamily. Heterooctamer of four alpha and four beta chains arranged as a tetramer of alpha/beta heterodimers. Pyruvate is required as a cofactor. In terms of processing, is synthesized initially as an inactive proenzyme. Formation of the active enzyme involves a self-maturation process in which the active site pyruvoyl group is generated from an internal serine residue via an autocatalytic post-translational modification. Two non-identical subunits are generated from the proenzyme in this reaction, and the pyruvate is formed at the N-terminus of the alpha chain, which is derived from the carboxyl end of the proenzyme. The post-translation cleavage follows an unusual pathway, termed non-hydrolytic serinolysis, in which the side chain hydroxyl group of the serine supplies its oxygen atom to form the C-terminus of the beta chain, while the remainder of the serine residue undergoes an oxidative deamination to produce ammonia and the pyruvoyl group blocking the N-terminus of the alpha chain.

The catalysed reaction is S-adenosyl-L-methionine + H(+) = S-adenosyl 3-(methylsulfanyl)propylamine + CO2. The protein operates within amine and polyamine biosynthesis; S-adenosylmethioninamine biosynthesis; S-adenosylmethioninamine from S-adenosyl-L-methionine: step 1/1. Its function is as follows. Catalyzes the decarboxylation of S-adenosylmethionine to S-adenosylmethioninamine (dcAdoMet), the propylamine donor required for the synthesis of the polyamines spermine and spermidine from the diamine putrescine. In Salmonella typhi, this protein is S-adenosylmethionine decarboxylase proenzyme.